The primary structure comprises 252 residues: Triosephosphate isomerase (252 aa).

10-12 (NWK) lines the substrate pocket. Residue His96 is the Electrophile of the active site. The Proton acceptor role is filled by Glu168. Residues Gly174, Ser214, and 235 to 236 (GG) each bind substrate.

Belongs to the triosephosphate isomerase family. Homodimer.

It is found in the cytoplasm. The enzyme catalyses D-glyceraldehyde 3-phosphate = dihydroxyacetone phosphate. Its pathway is carbohydrate biosynthesis; gluconeogenesis. The protein operates within carbohydrate degradation; glycolysis; D-glyceraldehyde 3-phosphate from glycerone phosphate: step 1/1. Functionally, involved in the gluconeogenesis. Catalyzes stereospecifically the conversion of dihydroxyacetone phosphate (DHAP) to D-glyceraldehyde-3-phosphate (G3P). The protein is Triosephosphate isomerase of Streptococcus pneumoniae serotype 2 (strain D39 / NCTC 7466).